The following is a 207-amino-acid chain: MAQGTLYIVSAPSGAGKSSLIQALLKTQPLYDTQVSVSHTTRQPRPGEVHGEHYFFVNHDEFKEMISRDAFLEHAEVFGNYYGTSREAIEQVLATGVDVFLDIDWQGAQQIRQKMPHARSIFILPPSKIELDRRLRGRGQDSEEVIAKRMAQAVAEMSHYAEYDYLIVNDDFDTALTDLKTIIRAERLRMSRQKQRHDALISKLLAD.

Residues 4 to 184 form the Guanylate kinase-like domain; that stretch reads GTLYIVSAPS…ALTDLKTIIR (181 aa). 11-18 provides a ligand contact to ATP; it reads APSGAGKS.

This sequence belongs to the guanylate kinase family.

The protein localises to the cytoplasm. It carries out the reaction GMP + ATP = GDP + ADP. Functionally, essential for recycling GMP and indirectly, cGMP. This chain is Guanylate kinase, found in Escherichia coli O6:K15:H31 (strain 536 / UPEC).